A 1083-amino-acid chain; its full sequence is RecBCD enzyme subunit RecB (1083 aa).

The UvrD-like helicase ATP-binding domain occupies 1-323; that stretch reads MKVFDLLGPL…QTLGTNWRSD (323 aa). The tract at residues 1-704 is DNA-binding and helicase activity, interacts with RecC; it reads MKVFDLLGPL…RGRAPGEAIV (704 aa). Residue 21–28 coordinates ATP; the sequence is ASAGTGKT. The region spanning 349-607 is the UvrD-like helicase C-terminal domain; the sequence is VQARHQGHRL…QIMTVWVSKG (259 aa). The nuclease activity, interacts with RecD and RecA stretch occupies residues 765 to 1083; the sequence is AWKRTSYSGL…LSKLLDAEAP (319 aa). Mg(2+)-binding residues include His830, Asp962, and Asp975. Asp975 serves as the catalytic For nuclease activity.

Belongs to the helicase family. UvrD subfamily. In terms of assembly, heterotrimer of RecB, RecC and RecD. All subunits contribute to DNA-binding. Interacts with RecA. Mg(2+) is required as a cofactor.

It catalyses the reaction Exonucleolytic cleavage (in the presence of ATP) in either 5'- to 3'- or 3'- to 5'-direction to yield 5'-phosphooligonucleotides.. The catalysed reaction is Couples ATP hydrolysis with the unwinding of duplex DNA by translocating in the 3'-5' direction.. It carries out the reaction ATP + H2O = ADP + phosphate + H(+). Functionally, a helicase/nuclease that prepares dsDNA breaks (DSB) for recombinational DNA repair. Binds to DSBs and unwinds DNA via a highly rapid and processive ATP-dependent bidirectional helicase activity. Holoenzyme degrades any linearized DNA that is unable to undergo homologous recombination. In the holoenzyme this subunit contributes DNA-dependent ATPase activity, exonuclease activity and 3'-5' helicase activity. Unlike the case in E.coli, suppresses RecA-dependent homologous recombination, is instead required for single-strand annealing pathway repair of DSB. This Mycolicibacterium smegmatis (strain ATCC 700084 / mc(2)155) (Mycobacterium smegmatis) protein is RecBCD enzyme subunit RecB.